Here is a 247-residue protein sequence, read N- to C-terminus: uncharacterized protein (247 aa).

Residues 225-247 (LASAPVPPSGSGNSGHRRANLGL) are disordered.

This is an uncharacterized protein from Methanocaldococcus jannaschii (strain ATCC 43067 / DSM 2661 / JAL-1 / JCM 10045 / NBRC 100440) (Methanococcus jannaschii).